A 458-amino-acid chain; its full sequence is Sulfite exporter TauE/SafE family protein 2 (458 aa).

12 consecutive transmembrane segments (helical) span residues 5–25, 53–73, 74–94, 101–121, 128–148, 150–170, 227–247, 267–287, 324–344, 348–368, 386–406, and 418–438; these read FVPI…EQEP, IELT…SSIS, SAGG…VAGL, SFSA…NLFV, GKTL…LLGV, IGVI…FAVF, FPWI…AVYL, YWLI…WICF, VMAL…GMLI, LLQV…MVLF, GTAS…LKVV, and IIVF…TSYG.

The protein belongs to the 4-toluene sulfonate uptake permease (TSUP) (TC 2.A.102) family.

Its subcellular location is the membrane. In Arabidopsis thaliana (Mouse-ear cress), this protein is Sulfite exporter TauE/SafE family protein 2.